The following is a 255-amino-acid chain: Increased copper sensitivity protein 2 (255 aa).

Residues 1–12 (MGKFEQKERERI) show a composition bias toward basic and acidic residues. Disordered stretches follow at residues 1 to 32 (MGKFEQKERERISTFSFPTTGSQSSTSIKSLG) and 82 to 142 (PGDK…RKSH). A compositionally biased stretch (polar residues) spans 13 to 30 (STFSFPTTGSQSSTSIKS). Positions 131–142 (SGRRKSYHRKSH) are enriched in basic residues. Position 217 is a phosphoserine (S217).

This Saccharomyces cerevisiae (strain ATCC 204508 / S288c) (Baker's yeast) protein is Increased copper sensitivity protein 2 (ICS2).